The primary structure comprises 602 residues: NAD-dependent protein deacetylase sir-2.1 (602 aa).

The segment at 25–57 (PEIETMHIENSVEGESGRQRTESTASVNSESWQ) is disordered. Residues 46–57 (ESTASVNSESWQ) are compositionally biased toward polar residues. Residues 119–374 (KLFTYNSLSD…RDICYALGGS (256 aa)) enclose the Deacetylase sirtuin-type domain. NAD(+)-binding positions include 144–163 (GAGV…DGIY) and 228–231 (QNID). His246 serves as the catalytic Proton acceptor. The Zn(2+) site is built by Cys254, Cys257, Cys278, and Cys281. NAD(+) contacts are provided by residues 318–320 (GSS), 343–345 (NRE), and Cys360. 2 disordered regions span residues 411 to 468 (QERR…SDEV) and 520 to 551 (RNRH…RSQS).

This sequence belongs to the sirtuin family. Class I subfamily. As to quaternary structure, interacts with ftt-2 and par-5. Interacts with daf-16 following heat-shock, which causes daf-16 to accumulate in the nucleus. Interaction with daf-16 is promoted by ftt-2. Zn(2+) is required as a cofactor.

Its subcellular location is the nucleus. The catalysed reaction is N(6)-acetyl-L-lysyl-[protein] + NAD(+) + H2O = 2''-O-acetyl-ADP-D-ribose + nicotinamide + L-lysyl-[protein]. In terms of biological role, NAD-dependent deacetylase. Required for a reduction of the 'Lys-16' acetylation of histone H4 (H4K16ac) on dosage-compensated X chromosomes in hermaphrodites. Functions upstream of daf-16 in the insulin-like signaling pathway, promoting daf-16 mediated transcriptional activation and increased life-span. May also regulate life-span independently of daf-16 by modulating the transcription of genes involved in the stress response of the endoplasmic reticulum (ER). Acts upstream of the nicotinic acid metabolism pathway, which may be linked to the regulation of longevity. Plays a role in ascaroside-mediated longevity and stress resistance. The polypeptide is NAD-dependent protein deacetylase sir-2.1 (sir-2.1) (Caenorhabditis briggsae).